Reading from the N-terminus, the 229-residue chain is MSDDRLIVALDVPNVVQGLALAEKLGDAVSFYKIGLGMLTGGGLALANELKQDHGKRIFLDMKLFDISATVEAAVRGLAQFNLDFLTVHGDPHVVRAAKEGAAGSDTKILAVTILTSLDRTDLDDCLIRDGEMLDLVAERAGRAFEAGADGVISSPHEATMIRALPEAKGRLIVTPGVRPTGSASGDQKRIATPRQAIADGADHIVVGRPIWQHQDPRAAAQMVVADLP.

Substrate is bound by residues aspartate 11, lysine 33, 61–70 (DMKLFDISAT), threonine 116, arginine 179, glutamine 188, glycine 208, and arginine 209. The active-site Proton donor is the lysine 63.

The protein belongs to the OMP decarboxylase family. Type 1 subfamily. As to quaternary structure, homodimer.

It carries out the reaction orotidine 5'-phosphate + H(+) = UMP + CO2. It participates in pyrimidine metabolism; UMP biosynthesis via de novo pathway; UMP from orotate: step 2/2. Functionally, catalyzes the decarboxylation of orotidine 5'-monophosphate (OMP) to uridine 5'-monophosphate (UMP). The protein is Orotidine 5'-phosphate decarboxylase of Jannaschia sp. (strain CCS1).